Here is a 333-residue protein sequence, read N- to C-terminus: Large ribosomal subunit protein uL3 (333 aa).

The protein belongs to the universal ribosomal protein uL3 family. As to quaternary structure, part of the 50S ribosomal subunit. Forms a cluster with proteins L14 and L24e.

Functionally, one of the primary rRNA binding proteins, it binds directly near the 3'-end of the 23S rRNA, where it nucleates assembly of the 50S subunit. The chain is Large ribosomal subunit protein uL3 from Methanocorpusculum labreanum (strain ATCC 43576 / DSM 4855 / Z).